Consider the following 635-residue polypeptide: Multiple inositol polyphosphate phosphatase 1 (635 aa).

The N-terminal stretch at Met1–Ser23 is a signal peptide. Over Leu24 to Ser565 the chain is Extracellular. Residues Lys66 to Pro102 are disordered. Residues Asn67 to Asn99 are compositionally biased toward low complexity. Residue His116 is part of the active site. The span at Ser380–Asp421 shows a compositional bias: low complexity. Residues Ser380–Glu425 are disordered. Residues Tyr566–Phe586 traverse the membrane as a helical segment. The Cytoplasmic segment spans residues Thr587 to Gln635. Positions Ser614–Pro624 are enriched in low complexity. Positions Ser614–Gln635 are disordered.

It belongs to the histidine acid phosphatase family. MINPP1 subfamily.

It is found in the membrane. The catalysed reaction is 1D-myo-inositol hexakisphosphate + H2O = 1D-myo-inositol 1,2,4,5,6-pentakisphosphate + phosphate. It carries out the reaction 1D-myo-inositol 1,2,4,5,6-pentakisphosphate + H2O = 1D-myo-inositol 1,2,5,6-tetrakisphosphate + phosphate. It catalyses the reaction 1D-myo-inositol 1,2,5,6-tetrakisphosphate + H2O = 1D-myo-inositol 1,2,6-trisphosphate + phosphate. The enzyme catalyses 1D-myo-inositol 1,2,6-trisphosphate + H2O = 1D-myo-inositol 1,2-bisphosphate + phosphate. The catalysed reaction is 1D-myo-inositol 1,2-bisphosphate + H2O = 1D-myo-inositol 2-phosphate + phosphate. It carries out the reaction (2R)-2,3-bisphosphoglycerate + H2O = (2R)-2-phosphoglycerate + phosphate. Probable multiple inositol polyphosphate phosphatase that hydrolyzes 1D-myo-inositol 1,3,4,5,6-pentakisphosphate (InsP5[2OH]) and 1D-myo-inositol hexakisphosphate (InsP6) to a range of less phosphorylated inositol phosphates. This regulates the availability of these various small molecule second messengers and metal chelators which control many aspects of cell physiology. May have a dual substrate specificity, and function as a 2,3-bisphosphoglycerate 3-phosphatase hydrolyzing 2,3-bisphosphoglycerate to 2-phosphoglycerate. 2,3-bisphosphoglycerate (BPG) is formed as part of the Rapoport-Luebering glycolytic bypass. The protein is Multiple inositol polyphosphate phosphatase 1 (mipp1) of Dictyostelium discoideum (Social amoeba).